We begin with the raw amino-acid sequence, 1242 residues long: Insulin receptor substrate 1 (1242 aa).

Position 3 is a phosphoserine (Ser3). A mediates interaction with PHIP region spans residues 3–137 (SPPESDGFSD…GAGGGGGSCS (135 aa)). A PH domain is found at 12 to 115 (DVRKVGYLRK…WYQALLQLHN (104 aa)). At Ser99 the chain carries Phosphoserine; by CK2. The IRS-type PTB domain occupies 160 to 264 (FKEVWQVILK…EAMRAMSDEF (105 aa)). The segment at 262-430 (DEFRPRSKSQ…SDGGFISSDE (169 aa)) is disordered. Residues 269–281 (KSQSSSNCSNPIS) show a composition bias toward low complexity. A phosphoserine; by RPS6KB1 mark is found at Ser270 and Ser307. A Phosphoserine; by IKKB, MAPK8 and RPS6KB1 modification is found at Ser312. Phosphoserine occurs at positions 315, 323, 330, 345, and 348. Basic residues predominate over residues 354 to 363 (THAHRHRGSA). 2 stretches are compositionally biased toward low complexity: residues 383–404 (SPSA…GSTS) and 412–424 (SSAS…SDGG). Ser419 carries the post-translational modification Phosphoserine. Residues Thr446 and Thr453 each carry the phosphothreonine modification. Phosphotyrosine; by INSR is present on Tyr465. A YXXM motif 1 motif is present at residues 465 to 468 (YICM). The residue at position 527 (Ser527) is a Phosphoserine; by RPS6KB1. Residues 551 to 554 (YTEM) carry the YXXM motif 2 motif. Over residues 592-610 (LERRGGHHRPDSSTLHTDD) the composition is skewed to basic and acidic residues. Residues 592–616 (LERRGGHHRPDSSTLHTDDGYMPMS) are disordered. Tyr612 is subject to Phosphotyrosine; by INSR. Residues 612–615 (YMPM) carry the YXXM motif 3 motif. Residues Ser616 and Ser629 each carry the phosphoserine modification. Residue Tyr632 is modified to Phosphotyrosine; by INSR. The YXXM motif 4 motif lies at 632–635 (YMPM). At Ser636 the chain carries Phosphoserine; by RPS6KB1. At Tyr662 the chain carries Phosphotyrosine. Positions 662–665 (YMMM) match the YXXM motif 5 motif. The tract at residues 668–693 (SGGCSPDIGGGPSSSSSSSNAVPSGT) is disordered. A YXXM motif 6 motif is present at residues 732–735 (YMNM). Disordered regions lie at residues 771–900 (FKHT…VNIE) and 918–937 (SPSV…EETG). Residues 776–785 (RPGEPEEGAR) are compositionally biased toward basic and acidic residues. Ser794 is modified (phosphoserine; by AMPK and SIK2). The segment covering 801–815 (AATADDSSSSTSSDS) has biased composition (low complexity). Ser892 is modified (phosphoserine). Tyr896 carries the post-translational modification Phosphotyrosine; by INSR. The tract at residues 896–898 (YVN) is GRB2-binding. Residues 918–928 (SPSVRCPSQLQ) are compositionally biased toward polar residues. Phosphotyrosine; by INSR occurs at positions 941 and 989. 3 short sequence motifs (YXXM motif) span residues 941-944 (YMKM), 989-992 (YMTM), and 1012-1015 (YADM). Residues 1057 to 1146 (SSLLGGPQGP…DVKRHSSASF (90 aa)) form a disordered region. Residues 1073-1085 (TRVNLSPNRNQSA) show a composition bias toward polar residues. Phosphoserine is present on Ser1100. Ser1101 carries the post-translational modification Phosphoserine; by RPS6KB1 and PKC/PRKCQ. Residues 1102–1114 (ETFSSTPSATRVG) show a composition bias toward polar residues. Phosphotyrosine; by INSR is present on Tyr1179. Glycyl lysine isopeptide (Lys-Gly) (interchain with G-Cter in ubiquitin) cross-links involve residues Lys1186 and Lys1189. A disordered region spans residues 1190–1242 (QCPQECTPEPQPPPPPPPHQPLGSGESSSTRRSSEDLSAYASISFQKQPEDRQ). Pro residues predominate over residues 1198–1209 (EPQPPPPPPPHQ). Low complexity predominate over residues 1210-1220 (PLGSGESSSTR). The residue at position 1229 (Tyr1229) is a Phosphotyrosine; by INSR.

As to quaternary structure, interacts with UBTF and PIK3CA. Interacts (via phosphorylated YXXM motifs) with PIK3R1. Interacts with ROCK1 and FER. Interacts (via PH domain) with PHIP. Interacts with GRB2. Interacts with SOCS7. Interacts (via IRS-type PTB domain) with IGF1R and INSR (via the tyrosine-phosphorylated NPXY motif). Interacts with ALK. Interacts with EIF2AK2/PKR. Interacts with GKAP1. Interacts with DGKZ in the absence of insulin; insulin stimulation decreases this interaction. Found in a ternary complex with DGKZ and PIP5K1A in the absence of insulin stimulation. Interacts with SQSTM1; the interaction is disrupted by the presence of tensin TNS2. Interacts with NCK1 (via SH2 domain). Interacts with NCK2 (via SH3 domain). Interacts with SH2B1; this interaction enhances leptin-induced activation of the PI3-kinase pathway. Interacts with DVL2; this interaction promotes the Wnt/beta-catenin signaling pathway. In terms of processing, serine phosphorylation of IRS1 is a mechanism for insulin resistance. Ser-307, Ser-312, Ser-315, and Ser-323 phosphorylations inhibit insulin action through disruption of IRS1 interaction with the insulin receptor INSR. Phosphorylation of Tyr-896 is required for GRB2-binding. Phosphorylated by ALK. Phosphorylated at Ser-270, Ser-307, Ser-636 and Ser-1101 by RPS6KB1; phosphorylation induces accelerated degradation of IRS1. Phosphorylated on tyrosine residues in response to insulin. In skeletal muscles, dephosphorylated on Tyr-612 by TNS2 under anabolic conditions; dephosphorylation results in the proteasomal degradation of IRS1. Post-translationally, ubiquitinated by the Cul7-RING(FBXW8) complex in a mTOR-dependent manner, leading to its degradation: the Cul7-RING(FBXW8) complex recognizes and binds IRS1 previously phosphorylated by S6 kinase (RPS6KB1 or RPS6KB2). Ubiquitinated by TRAF4 through 'Lys-29' linkage; this ubiquitination regulates the interaction of IRS1 with IGFR and IRS1 tyrosine phosphorylation upon IGF1 stimulation. S-nitrosylation at by BLVRB inhibits its activity.

It localises to the cytoplasm. It is found in the nucleus. In terms of biological role, signaling adapter protein that participates in the signal transduction from two prominent receptor tyrosine kinases, insulin receptor/INSR and insulin-like growth factor I receptor/IGF1R. Plays therefore an important role in development, growth, glucose homeostasis as well as lipid metabolism. Upon phosphorylation by the insulin receptor, functions as a signaling scaffold that propagates insulin action through binding to SH2 domain-containing proteins including the p85 regulatory subunit of PI3K, NCK1, NCK2, GRB2 or SHP2. Recruitment of GRB2 leads to the activation of the guanine nucleotide exchange factor SOS1 which in turn triggers the Ras/Raf/MEK/MAPK signaling cascade. Activation of the PI3K/AKT pathway is responsible for most of insulin metabolic effects in the cell, and the Ras/Raf/MEK/MAPK is involved in the regulation of gene expression and in cooperation with the PI3K pathway regulates cell growth and differentiation. Acts a positive regulator of the Wnt/beta-catenin signaling pathway through suppression of DVL2 autophagy-mediated degradation leading to cell proliferation. The sequence is that of Insulin receptor substrate 1 (IRS1) from Homo sapiens (Human).